Reading from the N-terminus, the 608-residue chain is Altered inheritance of mitochondria protein 9, mitochondrial (608 aa).

The transit peptide at 1-21 (MLRRIVNTGTKRLFRVPPRSS) directs the protein to the mitochondrion.

This sequence belongs to the AIM9 family.

The protein localises to the mitochondrion. The polypeptide is Altered inheritance of mitochondria protein 9, mitochondrial (AIM9) (Clavispora lusitaniae (strain ATCC 42720) (Yeast)).